The primary structure comprises 126 residues: 13 kDa ribonucleoprotein-associated protein (126 aa).

The protein belongs to the eukaryotic ribosomal protein eL8 family. In terms of assembly, component of the U3 snoRNP particle. Binds to the C'/D and B/C motifs in U3 snoRNA. Component of the 25S U4/U6.U5 tri-snRNP particle, a subcomplex of the spliceosome. Binds to the 5' stem-loop of U4 snRNA.

It is found in the nucleus. It localises to the nucleolus. Its function is as follows. Common component of the spliceosome and rRNA processing machinery. In association with the spliceosomal U4/U6.U5 tri-snRNP particle, required for splicing of pre-mRNA. In association with box C/D snoRNPs, required for processing of pre-ribosomal RNA (rRNA) and site-specific 2'-O-methylation of substrate RNAs. Essential for the accumulation and stability of U4 snRNA, U6 snRNA, and box C/D snoRNAs. This is 13 kDa ribonucleoprotein-associated protein (SNU13) from Candida glabrata (strain ATCC 2001 / BCRC 20586 / JCM 3761 / NBRC 0622 / NRRL Y-65 / CBS 138) (Yeast).